The chain runs to 517 residues: GMP synthase [glutamine-hydrolyzing] (517 aa).

One can recognise a Glutamine amidotransferase type-1 domain in the interval Arg-9–Leu-199. The active-site Nucleophile is the Cys-86. Catalysis depends on residues His-173 and Glu-175. In terms of domain architecture, GMPS ATP-PPase spans Trp-200–Arg-392. ATP is bound at residue Ser-227 to Ser-233.

Homodimer.

The catalysed reaction is XMP + L-glutamine + ATP + H2O = GMP + L-glutamate + AMP + diphosphate + 2 H(+). The protein operates within purine metabolism; GMP biosynthesis; GMP from XMP (L-Gln route): step 1/1. In terms of biological role, catalyzes the synthesis of GMP from XMP. This chain is GMP synthase [glutamine-hydrolyzing], found in Vibrio vulnificus (strain YJ016).